The sequence spans 567 residues: Restriction of telomere capping protein 5 (567 aa).

Positions 289-515 constitute a TLDc domain; that stretch reads KVMTPALLAQ…IQDVEVWGCG (227 aa).

The protein belongs to the RTC5 family.

Its subcellular location is the cytoplasm. Its function is as follows. May be involved in a process influencing telomere capping. This is Restriction of telomere capping protein 5 (RTC5) from Saccharomyces cerevisiae (strain YJM789) (Baker's yeast).